The chain runs to 324 residues: tRNA-cytidine(32) 2-sulfurtransferase (324 aa).

The segment at 1 to 26 (MQDLIDSPTAARTPAEEKIRHEGNKL) is disordered. The span at 14-26 (PAEEKIRHEGNKL) shows a compositional bias: basic and acidic residues. The PP-loop motif motif lies at 55 to 60 (SGGKDS). [4Fe-4S] cluster-binding residues include Cys-130, Cys-133, and Cys-221. A disordered region spans residues 278-310 (RPDANGDTAFDPIDPEDPREDAGDACASSPADG).

The protein belongs to the TtcA family. As to quaternary structure, homodimer. Mg(2+) is required as a cofactor. Requires [4Fe-4S] cluster as cofactor.

Its subcellular location is the cytoplasm. The catalysed reaction is cytidine(32) in tRNA + S-sulfanyl-L-cysteinyl-[cysteine desulfurase] + AH2 + ATP = 2-thiocytidine(32) in tRNA + L-cysteinyl-[cysteine desulfurase] + A + AMP + diphosphate + H(+). Its pathway is tRNA modification. Functionally, catalyzes the ATP-dependent 2-thiolation of cytidine in position 32 of tRNA, to form 2-thiocytidine (s(2)C32). The sulfur atoms are provided by the cysteine/cysteine desulfurase (IscS) system. This is tRNA-cytidine(32) 2-sulfurtransferase from Bordetella petrii (strain ATCC BAA-461 / DSM 12804 / CCUG 43448).